We begin with the raw amino-acid sequence, 272 residues long: Tryptophan synthase alpha chain (272 aa).

Active-site proton acceptor residues include E49 and D60.

Belongs to the TrpA family. Tetramer of two alpha and two beta chains.

It carries out the reaction (1S,2R)-1-C-(indol-3-yl)glycerol 3-phosphate + L-serine = D-glyceraldehyde 3-phosphate + L-tryptophan + H2O. Its pathway is amino-acid biosynthesis; L-tryptophan biosynthesis; L-tryptophan from chorismate: step 5/5. The alpha subunit is responsible for the aldol cleavage of indoleglycerol phosphate to indole and glyceraldehyde 3-phosphate. This Acidithiobacillus ferrooxidans (strain ATCC 23270 / DSM 14882 / CIP 104768 / NCIMB 8455) (Ferrobacillus ferrooxidans (strain ATCC 23270)) protein is Tryptophan synthase alpha chain.